We begin with the raw amino-acid sequence, 235 residues long: Small ribosomal subunit protein uS2 (235 aa).

Belongs to the universal ribosomal protein uS2 family.

The protein is Small ribosomal subunit protein uS2 of Geobacillus sp. (strain WCH70).